Consider the following 98-residue polypeptide: C-X-C motif chemokine 10 (98 aa).

The N-terminal stretch at 1–21 (MNQTAILICCLVFLTLSGIQG) is a signal peptide. The residue at position 26 (R26) is a Citrulline. Disulfide bonds link C30–C57 and C32–C74.

It belongs to the intercrine alpha (chemokine CxC) family.

Its subcellular location is the secreted. In terms of biological role, chemotactic for monocytes and T-lymphocytes. Binds to CXCR3. In Macaca nemestrina (Pig-tailed macaque), this protein is C-X-C motif chemokine 10 (CXCL10).